Reading from the N-terminus, the 149-residue chain is DnaJ homolog subfamily C member 24 (149 aa).

Residues 11 to 82 (DWYSILGADP…ETKREYDLQR (72 aa)) enclose the J domain. One can recognise a DPH-type MB domain in the interval 93–148 (VDAQVYLEEMSWNEGDHSFYLSCRCGGKYSVSKDEAEEVSLISCDTCSLIIELLHY). 4 residues coordinate Zn(2+): Cys-115, Cys-117, Cys-136, and Cys-139.

It belongs to the DPH4 family. As to quaternary structure, monomer and homooligomer. Iron binding promotes oligomerization.

The protein resides in the cytoplasm. Its subcellular location is the cytoskeleton. Its pathway is protein modification; peptidyl-diphthamide biosynthesis. Stimulates the ATPase activity of several Hsp70-type chaperones. This ability is enhanced by iron-binding. The iron-bound form is redox-active and can function as electron carrier. Plays a role in the diphthamide biosynthesis, a post-translational modification of histidine which occurs in translation elongation factor 2 (EEF2) which can be ADP-ribosylated by diphtheria toxin and by Pseudomonas exotoxin A (Eta). The polypeptide is DnaJ homolog subfamily C member 24 (Homo sapiens (Human)).